The following is a 456-amino-acid chain: Glutamyl-tRNA reductase (456 aa).

Substrate is bound by residues 49 to 52 (TCNR), S109, 114 to 116 (EQQ), and Q120. Catalysis depends on C50, which acts as the Nucleophile. Residue 189–194 (GAGSMG) coordinates NADP(+).

The protein belongs to the glutamyl-tRNA reductase family. As to quaternary structure, homodimer.

The enzyme catalyses (S)-4-amino-5-oxopentanoate + tRNA(Glu) + NADP(+) = L-glutamyl-tRNA(Glu) + NADPH + H(+). Its pathway is porphyrin-containing compound metabolism; protoporphyrin-IX biosynthesis; 5-aminolevulinate from L-glutamyl-tRNA(Glu): step 1/2. Catalyzes the NADPH-dependent reduction of glutamyl-tRNA(Glu) to glutamate 1-semialdehyde (GSA). This is Glutamyl-tRNA reductase from Mycolicibacterium vanbaalenii (strain DSM 7251 / JCM 13017 / BCRC 16820 / KCTC 9966 / NRRL B-24157 / PYR-1) (Mycobacterium vanbaalenii).